The chain runs to 186 residues: UPF0301 protein Sfri_2850 (186 aa).

Belongs to the UPF0301 (AlgH) family.

This is UPF0301 protein Sfri_2850 from Shewanella frigidimarina (strain NCIMB 400).